The primary structure comprises 353 residues: Photosystem II D2 protein (353 aa).

Residue threonine 2 is modified to N-acetylthreonine. A Phosphothreonine modification is found at threonine 2. Residues 41–61 (CAYFALGGWFTGTTFVTSWYT) form a helical membrane-spanning segment. Histidine 118 is a binding site for chlorophyll a. The helical transmembrane segment at 125–141 (GFMLRQFELARSVQLRP) threads the bilayer. The pheophytin a site is built by glutamine 130 and asparagine 143. Residues 153–166 (VFVSVFLIYPLGQS) traverse the membrane as a helical segment. Histidine 198 provides a ligand contact to chlorophyll a. A helical membrane pass occupies residues 208 to 228 (AALLCAIHGATVENTLFEDGD). Histidine 215 and phenylalanine 262 together coordinate a plastoquinone. Histidine 215 contacts Fe cation. Histidine 269 serves as a coordination point for Fe cation. A helical membrane pass occupies residues 279–295 (GLWMSALGVVGLALNLR).

Belongs to the reaction center PufL/M/PsbA/D family. In terms of assembly, PSII is composed of 1 copy each of membrane proteins PsbA, PsbB, PsbC, PsbD, PsbE, PsbF, PsbH, PsbI, PsbJ, PsbK, PsbL, PsbM, PsbT, PsbX, PsbY, PsbZ, Psb30/Ycf12, at least 3 peripheral proteins of the oxygen-evolving complex and a large number of cofactors. It forms dimeric complexes. The D1/D2 heterodimer binds P680, chlorophylls that are the primary electron donor of PSII, and subsequent electron acceptors. It shares a non-heme iron and each subunit binds pheophytin, quinone, additional chlorophylls, carotenoids and lipids. There is also a Cl(-1) ion associated with D1 and D2, which is required for oxygen evolution. The PSII complex binds additional chlorophylls, carotenoids and specific lipids. is required as a cofactor.

Its subcellular location is the plastid. It localises to the chloroplast thylakoid membrane. It carries out the reaction 2 a plastoquinone + 4 hnu + 2 H2O = 2 a plastoquinol + O2. Functionally, photosystem II (PSII) is a light-driven water:plastoquinone oxidoreductase that uses light energy to abstract electrons from H(2)O, generating O(2) and a proton gradient subsequently used for ATP formation. It consists of a core antenna complex that captures photons, and an electron transfer chain that converts photonic excitation into a charge separation. The D1/D2 (PsbA/PsbD) reaction center heterodimer binds P680, the primary electron donor of PSII as well as several subsequent electron acceptors. D2 is needed for assembly of a stable PSII complex. The protein is Photosystem II D2 protein of Spinacia oleracea (Spinach).